Consider the following 213-residue polypeptide: Amelotin (213 aa).

Residues 1-16 form the signal peptide; sequence MKTMILLLCLLGSAQS. Disordered regions lie at residues 22–43 and 162–213; these read NPAS…LPQQ and GAKA…NRTQ. The span at 33–43 shows a compositional bias: polar residues; it reads TPGQVTPLPQQ. The span at 169-180 shows a compositional bias: low complexity; the sequence is GTTPGHVTTPGV.

The protein belongs to the amelotin family. In terms of processing, phosphorylated by FAM20C in vitro. Post-translationally, O-glycosylated. In terms of tissue distribution, specifically expressed in maturation-stage ameloblasts.

The protein resides in the secreted. In terms of biological role, is a promoter of calcium phosphate mineralization, playing a critical role in the formation of the compact, mineralized, aprismatic enamel surface layer during the maturation stage of amelogenesis. The chain is Amelotin (Amtn) from Mus musculus (Mouse).